A 139-amino-acid polypeptide reads, in one-letter code: D-ribose pyranase (139 aa).

The Proton donor role is filled by His-20. Substrate contacts are provided by residues Asp-28, His-106, and 128-130 (YAN).

It belongs to the RbsD / FucU family. RbsD subfamily. Homodecamer.

Its subcellular location is the cytoplasm. The catalysed reaction is beta-D-ribopyranose = beta-D-ribofuranose. It functions in the pathway carbohydrate metabolism; D-ribose degradation; D-ribose 5-phosphate from beta-D-ribopyranose: step 1/2. Functionally, catalyzes the interconversion of beta-pyran and beta-furan forms of D-ribose. This chain is D-ribose pyranase, found in Pasteurella multocida (strain Pm70).